The chain runs to 82 residues: UPF0180 protein BH2667 (82 aa).

Belongs to the UPF0180 family.

This Halalkalibacterium halodurans (strain ATCC BAA-125 / DSM 18197 / FERM 7344 / JCM 9153 / C-125) (Bacillus halodurans) protein is UPF0180 protein BH2667.